The primary structure comprises 330 residues: Phosphate acyltransferase (330 aa).

This sequence belongs to the PlsX family. Homodimer. Probably interacts with PlsY.

It localises to the cytoplasm. The catalysed reaction is a fatty acyl-[ACP] + phosphate = an acyl phosphate + holo-[ACP]. Its pathway is lipid metabolism; phospholipid metabolism. Its function is as follows. Catalyzes the reversible formation of acyl-phosphate (acyl-PO(4)) from acyl-[acyl-carrier-protein] (acyl-ACP). This enzyme utilizes acyl-ACP as fatty acyl donor, but not acyl-CoA. The sequence is that of Phosphate acyltransferase from Streptococcus agalactiae serotype III (strain NEM316).